The primary structure comprises 495 residues: Ubiquinone biosynthesis monooxygenase COQ6, mitochondrial (495 aa).

This sequence belongs to the UbiH/COQ6 family. In terms of assembly, component of a multi-subunit COQ enzyme complex. FAD is required as a cofactor.

The protein resides in the mitochondrion inner membrane. It catalyses the reaction a 4-hydroxy-3-(all-trans-polyprenyl)benzoate + 2 reduced [2Fe-2S]-[ferredoxin] + O2 + 2 H(+) = a 3,4-dihydroxy-5-(all-trans-polyprenyl)benzoate + 2 oxidized [2Fe-2S]-[ferredoxin] + H2O. It carries out the reaction a 2-methoxy-6-(all-trans-polyprenyl)phenol + 2 reduced [2Fe-2S]-[ferredoxin] + O2 + 2 H(+) = a 2-methoxy-6-(all-trans-polyprenyl)benzene-1,4-diol + 2 oxidized [2Fe-2S]-[ferredoxin] + H2O. It functions in the pathway cofactor biosynthesis; ubiquinone biosynthesis. Its function is as follows. FAD-dependent monooxygenase required for two non-consecutive steps during ubiquinone biosynthesis. Required for the C5-ring hydroxylation during ubiquinone biosynthesis by catalyzing the hydroxylation of 4-hydroxy-3-(all-trans-polyprenyl)benzoic acid to 3,4-dihydroxy-5-(all-trans-polyprenyl)benzoic acid. Also acts downstream of coq4, for the C1-hydroxylation during ubiquinone biosynthesis by catalyzing the hydroxylation of 2-methoxy-6-(all-trans-polyprenyl)phenol to 2-methoxy-6-(all-trans-polyprenyl)benzene-1,4-diol. The electrons required for the hydroxylation reaction are funneled indirectly to coq6 from NADPH via a ferredoxin/ferredoxin reductase system. This Dictyostelium discoideum (Social amoeba) protein is Ubiquinone biosynthesis monooxygenase COQ6, mitochondrial.